Reading from the N-terminus, the 310-residue chain is UDP-N-acetylenolpyruvoylglucosamine reductase (310 aa).

Residues 31–216 (KIGGPADYFV…LRKIEELNQA (186 aa)) enclose the FAD-binding PCMH-type domain. The active site involves R180. The active-site Proton donor is the S230. E300 is an active-site residue.

It belongs to the MurB family. FAD is required as a cofactor.

The protein localises to the cytoplasm. The catalysed reaction is UDP-N-acetyl-alpha-D-muramate + NADP(+) = UDP-N-acetyl-3-O-(1-carboxyvinyl)-alpha-D-glucosamine + NADPH + H(+). The protein operates within cell wall biogenesis; peptidoglycan biosynthesis. Its function is as follows. Cell wall formation. The protein is UDP-N-acetylenolpyruvoylglucosamine reductase of Lachnoclostridium phytofermentans (strain ATCC 700394 / DSM 18823 / ISDg) (Clostridium phytofermentans).